The following is a 300-amino-acid chain: Light-independent protochlorophyllide reductase iron-sulfur ATP-binding protein (300 aa).

ATP is bound by residues 43-48 and lysine 72; that span reads GIGKST. Serine 47 is a Mg(2+) binding site. Positions 128 and 162 each coordinate [4Fe-4S] cluster. Position 213-214 (213-214) interacts with ATP; the sequence is NR.

Belongs to the NifH/BchL/ChlL family. In terms of assembly, homodimer. Protochlorophyllide reductase is composed of three subunits; ChlL, ChlN and ChlB. [4Fe-4S] cluster is required as a cofactor.

It catalyses the reaction chlorophyllide a + oxidized 2[4Fe-4S]-[ferredoxin] + 2 ADP + 2 phosphate = protochlorophyllide a + reduced 2[4Fe-4S]-[ferredoxin] + 2 ATP + 2 H2O. Its pathway is porphyrin-containing compound metabolism; chlorophyll biosynthesis (light-independent). In terms of biological role, component of the dark-operative protochlorophyllide reductase (DPOR) that uses Mg-ATP and reduced ferredoxin to reduce ring D of protochlorophyllide (Pchlide) to form chlorophyllide a (Chlide). This reaction is light-independent. The L component serves as a unique electron donor to the NB-component of the complex, and binds Mg-ATP. In Synechococcus sp. (strain RCC307), this protein is Light-independent protochlorophyllide reductase iron-sulfur ATP-binding protein.